We begin with the raw amino-acid sequence, 308 residues long: Apolipoprotein E (308 aa).

The first 18 residues, M1–A18, serve as a signal peptide directing secretion. A run of 8 repeats spans residues L75 to G96, P97 to E118, S119 to G140, Q141 to L162, R163 to E184, R185 to I206, P207 to R224, and G225 to E246. Positions L75 to E246 are 8 X 22 AA approximate tandem repeats. Positions H153–R163 are LDL and other lipoprotein receptors binding. L157–R160 lines the heparin pocket. Residues A205 to M281 are lipid-binding and lipoprotein association. Residue G220–L227 participates in heparin binding. Residues S257–K308 form a homooligomerization region. Positions R269–M281 are specificity for association with VLDL.

Belongs to the apolipoprotein A1/A4/E family. Homotetramer. May interact with ABCA1; functionally associated with ABCA1 in the biogenesis of HDLs. May interact with APP/A4 amyloid-beta peptide; the interaction is extremely stable in vitro but its physiological significance is unclear. May interact with MAPT. May interact with MAP2. In the cerebrospinal fluid, interacts with secreted SORL1. Interacts with PMEL; this allows the loading of PMEL luminal fragment on ILVs to induce fibril nucleation. Post-translationally, APOE exists as multiple glycosylated and sialylated glycoforms within cells and in plasma. The extent of glycosylation and sialylation are tissue and context specific. In terms of processing, glycated in plasma VLDL. Phosphorylated by FAM20C in the extracellular medium.

It is found in the secreted. It localises to the extracellular space. The protein resides in the extracellular matrix. The protein localises to the extracellular vesicle. Its subcellular location is the endosome. It is found in the multivesicular body. Functionally, APOE is an apolipoprotein, a protein associating with lipid particles, that mainly functions in lipoprotein-mediated lipid transport between organs via the plasma and interstitial fluids. APOE is a core component of plasma lipoproteins and is involved in their production, conversion and clearance. Apolipoproteins are amphipathic molecules that interact both with lipids of the lipoprotein particle core and the aqueous environment of the plasma. As such, APOE associates with chylomicrons, chylomicron remnants, very low density lipoproteins (VLDL) and intermediate density lipoproteins (IDL) but shows a preferential binding to high-density lipoproteins (HDL). It also binds a wide range of cellular receptors including the LDL receptor/LDLR and the very low-density lipoprotein receptor/VLDLR that mediate the cellular uptake of the APOE-containing lipoprotein particles. Finally, APOE also has a heparin-binding activity and binds heparan-sulfate proteoglycans on the surface of cells, a property that supports the capture and the receptor-mediated uptake of APOE-containing lipoproteins by cells. The chain is Apolipoprotein E (APOE) from Pteropus alecto (Black flying fox).